The primary structure comprises 71 residues: uncharacterized protein (71 aa).

An N-terminal signal peptide occupies residues 1-21; sequence MGVGLHGDHVGGELNSANAFT.

This is an uncharacterized protein from Haemophilus influenzae (strain ATCC 51907 / DSM 11121 / KW20 / Rd).